Reading from the N-terminus, the 883-residue chain is Translation initiation factor IF-2 (883 aa).

The disordered stretch occupies residues Val118–Glu261. A compositionally biased stretch (low complexity) spans Ala124–Ala150. 2 stretches are compositionally biased toward basic and acidic residues: residues Pro183–Ile200 and Lys252–Glu261. The tr-type G domain maps to Lys383–Lys552. The interval Gly392–Thr399 is G1. Position 392 to 399 (Gly392 to Thr399) interacts with GTP. Residues Gly417–His421 form a G2 region. Positions Asp438–Gly441 are G3. Residues Asp438 to His442 and Asn492 to Asp495 each bind GTP. Residues Asn492 to Asp495 are G4. Residues Ser528–Lys530 are G5.

It belongs to the TRAFAC class translation factor GTPase superfamily. Classic translation factor GTPase family. IF-2 subfamily.

The protein localises to the cytoplasm. One of the essential components for the initiation of protein synthesis. Protects formylmethionyl-tRNA from spontaneous hydrolysis and promotes its binding to the 30S ribosomal subunits. Also involved in the hydrolysis of GTP during the formation of the 70S ribosomal complex. The chain is Translation initiation factor IF-2 from Geobacter sulfurreducens (strain ATCC 51573 / DSM 12127 / PCA).